Consider the following 66-residue polypeptide: Toxin Tppa2 (66 aa).

The 63-residue stretch at 1 to 63 (KDGYLVGNDG…TWSRATNKCG (63 aa)) folds into the LCN-type CS-alpha/beta domain. 4 disulfide bridges follow: Cys-11–Cys-62, Cys-15–Cys-37, Cys-23–Cys-43, and Cys-27–Cys-45. Cys-62 carries the post-translational modification Cysteine amide.

The protein belongs to the long (4 C-C) scorpion toxin superfamily. Sodium channel inhibitor family. Beta subfamily. Expressed by the venom gland.

It localises to the secreted. In terms of biological role, beta toxins bind voltage-independently at site-4 of sodium channels (Nav) and shift the voltage of activation toward more negative potentials thereby affecting sodium channel activation and promoting spontaneous and repetitive firing. The protein is Toxin Tppa2 of Tityus pachyurus (Colombian scorpion).